Reading from the N-terminus, the 274-residue chain is NAD-dependent protein deacetylase (274 aa).

The region spanning 1–274 (MDSRMSDLQA…CDEVLAEVVP (274 aa)) is the Deacetylase sirtuin-type domain. NAD(+) is bound by residues 26-46 (GAGC…GQWK) and 104-107 (QNVD). His-122 acts as the Proton acceptor in catalysis. Zn(2+) is bound by residues Cys-130, Cys-133, Cys-181, and Cys-184. Residues 221-223 (GSS), 247-249 (NLG), and Cys-265 contribute to the NAD(+) site.

The protein belongs to the sirtuin family. Class II subfamily. Requires Zn(2+) as cofactor.

The protein localises to the cytoplasm. It carries out the reaction N(6)-acetyl-L-lysyl-[protein] + NAD(+) + H2O = 2''-O-acetyl-ADP-D-ribose + nicotinamide + L-lysyl-[protein]. In terms of biological role, NAD-dependent protein deacetylase which modulates the activities of several enzymes which are inactive in their acetylated form. This is NAD-dependent protein deacetylase from Bordetella pertussis (strain Tohama I / ATCC BAA-589 / NCTC 13251).